Consider the following 668-residue polypeptide: ATP-dependent RNA helicase MSS116, mitochondrial (668 aa).

The transit peptide at 1 to 38 (MLKQLSRSLGIRSSPIVANLIRSKQVCTRGFHISLVKQ) directs the protein to the mitochondrion. A Q motif motif is present at residues 87–115 (DFKGKGYIHDSIINSLHKNDFKELTPIQQ). One can recognise a Helicase ATP-binding domain in the interval 119 to 300 (VPIFNTEKGL…KKHIHPEYEF (182 aa)). Position 132–139 (132–139 (AKTGTGKT)) interacts with ATP. Residues 242–245 (DEAD) carry the DEAD box motif. Residues 332–501 (SLSELHGIMK…NIIDQIESPL (170 aa)) form the Helicase C-terminal domain. The segment at 585–668 (YSDFSRSGMS…EHRRIRDHDE (84 aa)) is disordered. Residues 586–597 (SDFSRSGMSQRP) show a composition bias toward polar residues. Low complexity predominate over residues 609–636 (NGRGKYGNNRNNDWSYQNKNRYNNNNNR). Over residues 637–668 (QTERSYDSDRKSHNDWKYEKKFEHRRIRDHDE) the composition is skewed to basic and acidic residues.

Belongs to the DEAD box helicase family. DDX18/HAS1 subfamily.

It localises to the mitochondrion matrix. It carries out the reaction ATP + H2O = ADP + phosphate + H(+). Functionally, ATP-dependent RNA helicase required for mitochondrial splicing of group I and II introns. Also required for efficient mitochondrial translation. In Candida albicans (strain SC5314 / ATCC MYA-2876) (Yeast), this protein is ATP-dependent RNA helicase MSS116, mitochondrial (MSS116).